We begin with the raw amino-acid sequence, 508 residues long: Serine/threonine protein kinase OSK3 (508 aa).

Residues 17 to 269 (YNLGRTLGIG…IREIREHQWF (253 aa)) enclose the Protein kinase domain. Residues 23–31 (LGIGSFGKV) and K46 each bind ATP. D140 (proton acceptor) is an active-site residue. The region spanning 290–330 (MIDEDTLQDVVNLGYGKDHVCESLRNRLQNEATVAYYLLLD) is the UBA domain. The 49-residue stretch at 459–507 (NGRLPAVIKFEIQLYKTRDEKYLLDMQRVTGPQLLFLDFCADFLTKLRV) folds into the KA1 domain.

The protein belongs to the protein kinase superfamily. Ser/Thr protein kinase family. Interacts with HDR1. In terms of tissue distribution, strongly expressed in immature seeds. Mostly expressed in panicles, and to a lower extent, in leaf sheaths.

Its subcellular location is the nucleus. It carries out the reaction L-seryl-[protein] + ATP = O-phospho-L-seryl-[protein] + ADP + H(+). The catalysed reaction is L-threonyl-[protein] + ATP = O-phospho-L-threonyl-[protein] + ADP + H(+). This is Serine/threonine protein kinase OSK3 from Oryza sativa subsp. indica (Rice).